The sequence spans 498 residues: MIKINFNWRTFYLLTIVFRFVFTLSDSYIHPDEHFQSLEVLTNRILNYSTNIPWEFQDDPARSLAPLYFIYGPLLYFIKFFKLNLTALQIWYIARLQISILSWIITDFCLYWMLPSKPERIKAIFFTSTSYITLVYQNHLFSNSIETLLLLVTILLIDDLRYVQESKDQDVQNLNKNKNLFYTGVLISLGIFNRITFPAFLILPGWFVMKYVLKHYVSGLYLVMGFFSTTALLILVDTILFGNINNVVAEPFNVSSYIIAPLNNLLYNARYENLAQHGIHPYYTHILVNMPQILGPGLIFFVSKSYTKTTPFLTVISGLLFLSVIPHQELRFLIPLLPLACCSFDFTLKWVQPWMLYTWYIFNIFMSILMGKLHQGGVVPVLDHIKSEASVQVWWRTYTPPSWILGSNSTETTHLGEKLNDNKFINIVDCMGADSKEVQQILQTISTNKPVYLITPIASFKHFDESRFSPVWNYTFHLDLDHLDFADIQPGLGVYQLL.

The chain crosses the membrane as a helical span at residues 11-31 (FYLLTIVFRFVFTLSDSYIHP). A glycan (N-linked (GlcNAc...) asparagine) is linked at Asn47. A helical membrane pass occupies residues 63 to 83 (SLAPLYFIYGPLLYFIKFFKL). N-linked (GlcNAc...) asparagine glycosylation occurs at Asn84. Transmembrane regions (helical) follow at residues 96–116 (LQISILSWIITDFCLYWMLPS), 140–160 (LFSNSIETLLLLVTILLIDDL), 189–209 (LGIFNRITFPAFLILPGWFVM), 222–242 (LVMGFFSTTALLILVDTILFG), 247–267 (VVAEPFNVSSYIIAPLNNLLY), 282–302 (YYTHILVNMPQILGPGLIFFV), 310–330 (TPFLTVISGLLFLSVIPHQEL), 332–348 (FLIPLLPLACCSFDFTL), and 350–370 (WVQPWMLYTWYIFNIFMSILM). 2 N-linked (GlcNAc...) asparagine glycosylation sites follow: Asn408 and Asn473.

This sequence belongs to the glycosyltransferase 22 family. PIGZ subfamily.

It is found in the endoplasmic reticulum membrane. The protein operates within glycolipid biosynthesis; glycosylphosphatidylinositol-anchor biosynthesis. Its function is as follows. Alpha-1,2-mannosyltransferase involved in glycosylphosphatidylinositol-anchor biosynthesis. Transfers a fourth mannose to trimannosyl-GPIs during GPI precursor assembly. The presence of a fourth mannose in GPI is essential in fungi. The protein is GPI mannosyltransferase 4 (SMP3) of Candida albicans (strain SC5314 / ATCC MYA-2876) (Yeast).